A 253-amino-acid polypeptide reads, in one-letter code: CENP-A recruiting complex protein mis20 (253 aa).

The interval 113-136 (TGPTTSKNKHPSHSNTIRSPPYKV) is disordered.

In terms of assembly, component of the CENP-A recruiting complex composed of at least mis16, mis19, mis19 and mis20.

Its subcellular location is the cytoplasm. The protein resides in the cytoskeleton. It is found in the microtubule organizing center. It localises to the spindle pole body. The protein localises to the chromosome. Its subcellular location is the centromere. Its function is as follows. Component of the CENP-A recruiting complex that ensures the integrity of mitotic spindles through maintenance of kinetochore factors mis6/CENP-I and cnp1/CENP-A. Seems dispensable for proper chromosome segregation. This chain is CENP-A recruiting complex protein mis20, found in Schizosaccharomyces pombe (strain 972 / ATCC 24843) (Fission yeast).